Here is a 566-residue protein sequence, read N- to C-terminus: NAD-dependent malic enzyme (566 aa).

Residue Tyr-105 is the Proton donor of the active site. NAD(+) is bound at residue Arg-158. The Proton acceptor role is filled by Lys-176. A divalent metal cation is bound by residues Glu-247, Asp-248, and Asp-271. 2 residues coordinate NAD(+): Asp-271 and Asn-419.

The protein belongs to the malic enzymes family. As to quaternary structure, homotetramer. Mg(2+) serves as cofactor. Requires Mn(2+) as cofactor.

It carries out the reaction (S)-malate + NAD(+) = pyruvate + CO2 + NADH. The catalysed reaction is oxaloacetate + H(+) = pyruvate + CO2. This chain is NAD-dependent malic enzyme, found in Acinetobacter baylyi (strain ATCC 33305 / BD413 / ADP1).